The chain runs to 316 residues: Lys-63-specific deubiquitinase BRCC36 (316 aa).

An N-acetylalanine modification is found at Ala2. Residues 12–179 (VHLESDAFLV…YTCFQSIQAQ (168 aa)) enclose the MPN domain. Residues His122, His124, and Asp135 each coordinate Zn(2+). Positions 122–135 (HSHPHITVWPSHVD) match the JAMM motif motif. Ser258 carries the phosphoserine modification.

This sequence belongs to the peptidase M67A family. BRCC36 subfamily. Component of the ARISC complex, at least composed of UIMC1/RAP80, ABRAXAS1, BRCC3/BRCC36, BABAM2 and BABAM1/NBA1. Component of the BRCA1-A complex, at least composed of BRCA1, BARD1, UIMC1/RAP80, ABRAXAS1, BRCC3/BRCC36, BABAM2 and BABAM1/NBA1. In the BRCA1-A complex, interacts directly with ABRAXAS1 and BABAM2. Component of the BRISC complex, at least composed of ABRAXAS2, BRCC3/BRCC36, BABAM2 and BABAM1/NBA1. Identified in a complex with SHMT2 and the other subunits of the BRISC complex. In the BRISC complex, interacts directly with ABRAXAS2. Identified in a complex with ABRAXAS2 and NUMA1. The BRISC complex interacts with the CSN complex. Component of the BRCA1/BRCA2 containing complex (BRCC), which also contains BRCA1, BRCA2, BARD1, BABAM2 and RAD51. BRCC is a ubiquitin E3 ligase complex that enhances cellular survival following DNA damage. Interacts with BRCA1. Binds polyubiquitin. Interacts with PWWP2B. Interacts with HDAC1; this interaction is enhanced in the presence of PWWP2B. Requires Zn(2+) as cofactor.

The protein resides in the nucleus. It is found in the cytoplasm. Its subcellular location is the cytoskeleton. It localises to the spindle pole. Metalloprotease that specifically cleaves 'Lys-63'-linked polyubiquitin chains. Does not have activity toward 'Lys-48'-linked polyubiquitin chains. Component of the BRCA1-A complex, a complex that specifically recognizes 'Lys-63'-linked ubiquitinated histones H2A and H2AX at DNA lesions sites, leading to target the BRCA1-BARD1 heterodimer to sites of DNA damage at double-strand breaks (DSBs). In the BRCA1-A complex, it specifically removes 'Lys-63'-linked ubiquitin on histones H2A and H2AX, antagonizing the RNF8-dependent ubiquitination at double-strand breaks (DSBs). Catalytic subunit of the BRISC complex, a multiprotein complex that specifically cleaves 'Lys-63'-linked ubiquitin in various substrates. Mediates the specific 'Lys-63'-specific deubiquitination associated with the COP9 signalosome complex (CSN), via the interaction of the BRISC complex with the CSN complex. The BRISC complex is required for normal mitotic spindle assembly and microtubule attachment to kinetochores via its role in deubiquitinating NUMA1. Plays a role in interferon signaling via its role in the deubiquitination of the interferon receptor IFNAR1; deubiquitination increases IFNAR1 activity by enhancing its stability and cell surface expression. Acts as a regulator of the NLRP3 inflammasome by mediating deubiquitination of NLRP3, leading to NLRP3 inflammasome assembly. Down-regulates the response to bacterial lipopolysaccharide (LPS) via its role in IFNAR1 deubiquitination. Deubiquitinates HDAC1 and PWWP2B leading to their stabilization. This is Lys-63-specific deubiquitinase BRCC36 (BRCC3) from Callithrix jacchus (White-tufted-ear marmoset).